The following is a 334-amino-acid chain: Deoxyhypusine synthase (334 aa).

Residues 73-77 (SNIIS), 99-101 (TGG), Glu105, and Asp207 contribute to the NAD(+) site. 104 to 105 (EE) contributes to the spermidine binding site. Residues Asp212 and His256 each coordinate spermidine. 276-277 (NA) serves as a coordination point for NAD(+). Spermidine is bound by residues 282 to 284 (GSD) and 291 to 297 (EAVSWGK). The active-site Nucleophile is Lys297. 310 to 311 (DA) is an NAD(+) binding site.

The protein belongs to the deoxyhypusine synthase family. NAD(+) is required as a cofactor.

It catalyses the reaction [eIF5A protein]-L-lysine + spermidine = [eIF5A protein]-deoxyhypusine + propane-1,3-diamine. The protein operates within protein modification; eIF5A hypusination. In terms of biological role, catalyzes the NAD-dependent oxidative cleavage of spermidine and the subsequent transfer of the butylamine moiety of spermidine to the epsilon-amino group of a specific lysine residue of the eIF-5A precursor protein to form the intermediate deoxyhypusine residue. This Encephalitozoon cuniculi (strain GB-M1) (Microsporidian parasite) protein is Deoxyhypusine synthase (DYS1).